Here is a 424-residue protein sequence, read N- to C-terminus: Protein shisa-9 (424 aa).

The first 23 residues, 1–23, serve as a signal peptide directing secretion; it reads MRRVLRLLLGCFLTELCARVCRA. The Extracellular portion of the chain corresponds to 24-149; it reads QERAGHGQLA…DPLHDPTKDK (126 aa). N-linked (GlcNAc...) asparagine glycosylation is found at asparagine 45, asparagine 89, and asparagine 116. The chain crosses the membrane as a helical span at residues 150–170; sequence TNLIVYIICGVVAVMVLVGIF. Residues 171–424 are Cytoplasmic-facing; it reads TKLGLEKAHR…ITNSKTEVTV (254 aa). Residues 333-424 are disordered; it reads PRAFSPEHGP…ITNSKTEVTV (92 aa). The segment covering 414-424 has biased composition (polar residues); that stretch reads FITNSKTEVTV.

This sequence belongs to the shisa family. SHISA9 subfamily. As to quaternary structure, component of some AMPA receptors (ionotropic glutamate receptors) complex, at least composed of some AMPA receptor (GRIA1, GRIA2 and/or GRIA3), CACNG2 and SHISA9, as well as low level of DLG4.

The protein resides in the cell projection. It is found in the dendritic spine membrane. It localises to the synapse. Regulator of short-term neuronal synaptic plasticity in the dentate gyrus. Associates with AMPA receptors (ionotropic glutamate receptors) in synaptic spines and promotes AMPA receptor desensitization at excitatory synapses. This is Protein shisa-9 (SHISA9) from Homo sapiens (Human).